Consider the following 505-residue polypeptide: Maturase K (505 aa).

Belongs to the intron maturase 2 family. MatK subfamily.

The protein resides in the plastid. The protein localises to the chloroplast. Its function is as follows. Usually encoded in the trnK tRNA gene intron. Probably assists in splicing its own and other chloroplast group II introns. In Apocynum androsaemifolium (Spreading dogbane), this protein is Maturase K.